A 389-amino-acid polypeptide reads, in one-letter code: 23S rRNA (uracil(747)-C(5))-methyltransferase RlmC (389 aa).

Cys-6, Cys-14, Cys-17, and Cys-92 together coordinate [4Fe-4S] cluster. 4 residues coordinate S-adenosyl-L-methionine: Gln-217, Phe-246, Glu-273, and Asn-319. The active-site Nucleophile is the Cys-346.

This sequence belongs to the class I-like SAM-binding methyltransferase superfamily. RNA M5U methyltransferase family. RlmC subfamily.

It carries out the reaction uridine(747) in 23S rRNA + S-adenosyl-L-methionine = 5-methyluridine(747) in 23S rRNA + S-adenosyl-L-homocysteine + H(+). In terms of biological role, catalyzes the formation of 5-methyl-uridine at position 747 (m5U747) in 23S rRNA. In Glaesserella parasuis serovar 5 (strain SH0165) (Haemophilus parasuis), this protein is 23S rRNA (uracil(747)-C(5))-methyltransferase RlmC.